Here is a 596-residue protein sequence, read N- to C-terminus: Mitoguardin 2 (596 aa).

Transmembrane regions (helical) follow at residues 11–31 and 40–60; these read IMQA…STFG and LSPS…ALAL. Disordered stretches follow at residues 67 to 158 and 576 to 596; these read RRGR…AAWE and ALPK…GQQD. The segment covering 110 to 123 has biased composition (polar residues); it reads MSPSTRSNDTLSGV. The span at 124-140 shows a compositional bias: low complexity; sequence SSIAQSKHSSSSHSIAS. 2 stretches are compositionally biased toward polar residues: residues 143–152 and 583–596; these read VPSSPNQSVN and QAES…GQQD.

It belongs to the mitoguardin family. In terms of assembly, homodimer and heterodimer; forms heterodimers with miga1.

It localises to the mitochondrion outer membrane. Its function is as follows. Regulator of mitochondrial fusion: acts by forming homo- and heterodimers at the mitochondrial outer membrane and facilitating the formation of pld6/MitoPLD dimers. May act by regulating phospholipid metabolism via pld6/MitoPLD. The sequence is that of Mitoguardin 2 from Danio rerio (Zebrafish).